Here is a 507-residue protein sequence, read N- to C-terminus: AMP phosphorylase (507 aa).

Residues Gly168, 194 to 199 (SRAITG), and Thr203 each bind AMP. The active-site Proton donor is Asp256. Residues Ser264 and Lys288 each coordinate AMP.

The protein belongs to the thymidine/pyrimidine-nucleoside phosphorylase family. Type 2 subfamily.

It carries out the reaction AMP + phosphate = alpha-D-ribose 1,5-bisphosphate + adenine. The catalysed reaction is CMP + phosphate = cytosine + alpha-D-ribose 1,5-bisphosphate. The enzyme catalyses UMP + phosphate = alpha-D-ribose 1,5-bisphosphate + uracil. Catalyzes the conversion of AMP and phosphate to adenine and ribose 1,5-bisphosphate (R15P). Exhibits phosphorylase activity toward CMP and UMP in addition to AMP. Functions in an archaeal AMP degradation pathway, together with R15P isomerase and RubisCO. In Methanosarcina mazei (strain ATCC BAA-159 / DSM 3647 / Goe1 / Go1 / JCM 11833 / OCM 88) (Methanosarcina frisia), this protein is AMP phosphorylase.